The primary structure comprises 315 residues: DNA-directed RNA polymerase subunit alpha (315 aa).

Residues 1-228 (MLEIEKPVIQ…EHFKLFMTLT (228 aa)) are alpha N-terminal domain (alpha-NTD). The tract at residues 245-315 (KEKALEMTIE…LGLNLRLNDE (71 aa)) is alpha C-terminal domain (alpha-CTD).

Belongs to the RNA polymerase alpha chain family. Homodimer. The RNAP catalytic core consists of 2 alpha, 1 beta, 1 beta' and 1 omega subunit. When a sigma factor is associated with the core the holoenzyme is formed, which can initiate transcription.

The catalysed reaction is RNA(n) + a ribonucleoside 5'-triphosphate = RNA(n+1) + diphosphate. Its function is as follows. DNA-dependent RNA polymerase catalyzes the transcription of DNA into RNA using the four ribonucleoside triphosphates as substrates. In Clostridium perfringens (strain ATCC 13124 / DSM 756 / JCM 1290 / NCIMB 6125 / NCTC 8237 / Type A), this protein is DNA-directed RNA polymerase subunit alpha.